The chain runs to 230 residues: Cytochrome c oxidase subunit 2 (230 aa).

Over 1–14 (MAHPSQLGFQDAAS) the chain is Mitochondrial intermembrane. Residues 15–45 (PVMEELLHFHDHALMIVLLISTLVLYIIVAM) form a helical membrane-spanning segment. Topologically, residues 46-59 (VSTKLTNKYILDSQ) are mitochondrial matrix. Residues 60–87 (EIEIVWTVLPAVILILIALPSLRILYLM) traverse the membrane as a helical segment. Topologically, residues 88–230 (DEINDPHLTI…KWSTMMLEDA (143 aa)) are mitochondrial intermembrane. Residues His-161, Cys-196, Glu-198, Cys-200, His-204, and Met-207 each coordinate Cu cation. Glu-198 is a Mg(2+) binding site.

This sequence belongs to the cytochrome c oxidase subunit 2 family. Component of the cytochrome c oxidase (complex IV, CIV), a multisubunit enzyme composed of 14 subunits. The complex is composed of a catalytic core of 3 subunits MT-CO1, MT-CO2 and MT-CO3, encoded in the mitochondrial DNA, and 11 supernumerary subunits COX4I, COX5A, COX5B, COX6A, COX6B, COX6C, COX7A, COX7B, COX7C, COX8 and NDUFA4, which are encoded in the nuclear genome. The complex exists as a monomer or a dimer and forms supercomplexes (SCs) in the inner mitochondrial membrane with NADH-ubiquinone oxidoreductase (complex I, CI) and ubiquinol-cytochrome c oxidoreductase (cytochrome b-c1 complex, complex III, CIII), resulting in different assemblies (supercomplex SCI(1)III(2)IV(1) and megacomplex MCI(2)III(2)IV(2)). Found in a complex with TMEM177, COA6, COX18, COX20, SCO1 and SCO2. Interacts with TMEM177 in a COX20-dependent manner. Interacts with COX20. Interacts with COX16. It depends on Cu cation as a cofactor.

The protein localises to the mitochondrion inner membrane. The catalysed reaction is 4 Fe(II)-[cytochrome c] + O2 + 8 H(+)(in) = 4 Fe(III)-[cytochrome c] + 2 H2O + 4 H(+)(out). In terms of biological role, component of the cytochrome c oxidase, the last enzyme in the mitochondrial electron transport chain which drives oxidative phosphorylation. The respiratory chain contains 3 multisubunit complexes succinate dehydrogenase (complex II, CII), ubiquinol-cytochrome c oxidoreductase (cytochrome b-c1 complex, complex III, CIII) and cytochrome c oxidase (complex IV, CIV), that cooperate to transfer electrons derived from NADH and succinate to molecular oxygen, creating an electrochemical gradient over the inner membrane that drives transmembrane transport and the ATP synthase. Cytochrome c oxidase is the component of the respiratory chain that catalyzes the reduction of oxygen to water. Electrons originating from reduced cytochrome c in the intermembrane space (IMS) are transferred via the dinuclear copper A center (CU(A)) of subunit 2 and heme A of subunit 1 to the active site in subunit 1, a binuclear center (BNC) formed by heme A3 and copper B (CU(B)). The BNC reduces molecular oxygen to 2 water molecules using 4 electrons from cytochrome c in the IMS and 4 protons from the mitochondrial matrix. The protein is Cytochrome c oxidase subunit 2 (mt-co2) of Salmo salar (Atlantic salmon).